Here is a 402-residue protein sequence, read N- to C-terminus: Tryptophan synthase beta chain (402 aa).

Lysine 91 carries the post-translational modification N6-(pyridoxal phosphate)lysine.

The protein belongs to the TrpB family. As to quaternary structure, tetramer of two alpha and two beta chains. Pyridoxal 5'-phosphate is required as a cofactor.

The catalysed reaction is (1S,2R)-1-C-(indol-3-yl)glycerol 3-phosphate + L-serine = D-glyceraldehyde 3-phosphate + L-tryptophan + H2O. Its pathway is amino-acid biosynthesis; L-tryptophan biosynthesis; L-tryptophan from chorismate: step 5/5. Functionally, the beta subunit is responsible for the synthesis of L-tryptophan from indole and L-serine. This Streptococcus thermophilus (strain ATCC BAA-250 / LMG 18311) protein is Tryptophan synthase beta chain.